The sequence spans 445 residues: Methylenetetrahydrofolate--tRNA-(uracil-5-)-methyltransferase TrmFO (445 aa).

9–14 provides a ligand contact to FAD; the sequence is GGGLAG.

It belongs to the MnmG family. TrmFO subfamily. FAD is required as a cofactor.

Its subcellular location is the cytoplasm. The catalysed reaction is uridine(54) in tRNA + (6R)-5,10-methylene-5,6,7,8-tetrahydrofolate + NADH + H(+) = 5-methyluridine(54) in tRNA + (6S)-5,6,7,8-tetrahydrofolate + NAD(+). It catalyses the reaction uridine(54) in tRNA + (6R)-5,10-methylene-5,6,7,8-tetrahydrofolate + NADPH + H(+) = 5-methyluridine(54) in tRNA + (6S)-5,6,7,8-tetrahydrofolate + NADP(+). Functionally, catalyzes the folate-dependent formation of 5-methyl-uridine at position 54 (M-5-U54) in all tRNAs. The protein is Methylenetetrahydrofolate--tRNA-(uracil-5-)-methyltransferase TrmFO of Aquifex aeolicus (strain VF5).